The sequence spans 319 residues: Cytochrome c biogenesis protein CcsA (319 aa).

8 consecutive transmembrane segments (helical) span residues 14 to 34 (AFGGLLIAMLVYWISLAFPGI), 36 to 56 (GLNRLATLITLLVNIALTLTL), 69 to 89 (SNLYESLLFLAWGLTFVHLFI), 97 to 117 (LIGATAIPVAMFVTAFASLAL), 142 to 162 (IMMLSYAILILGSLLSILFLI), 227 to 247 (TIGLGFPLLTIGIIAGAVWAN), 254 to 274 (WSWDPKETWALITWLIFAAYL), and 288 to 308 (AILASLGFLVVWICYLGVNFL).

The protein belongs to the CcmF/CycK/Ccl1/NrfE/CcsA family. As to quaternary structure, may interact with Ccs1.

It localises to the plastid. It is found in the chloroplast thylakoid membrane. Required during biogenesis of c-type cytochromes (cytochrome c6 and cytochrome f) at the step of heme attachment. The chain is Cytochrome c biogenesis protein CcsA from Pyropia yezoensis (Susabi-nori).